The following is a 481-amino-acid chain: UDP-glucose 6-dehydrogenase 1 (481 aa).

Residues 8-13 (GAGYVG), Asp-33, Arg-38, 86-90 (VNTPT), 127-128 (ST), and Glu-162 each bind NAD(+). Substrate contacts are provided by residues 158-162 (EFLAE), 217-224 (KLAANAFL), and 257-270 (RIGAKFLNASVGFG). Cys-273 acts as the Nucleophile in catalysis. 273-276 (CFQK) is an NAD(+) binding site. Position 335-336 (335-336 (FK)) interacts with substrate. NAD(+) is bound at residue Arg-343. A Phosphoserine modification is found at Ser-394. Arg-448 provides a ligand contact to substrate.

This sequence belongs to the UDP-glucose/GDP-mannose dehydrogenase family.

It carries out the reaction UDP-alpha-D-glucose + 2 NAD(+) + H2O = UDP-alpha-D-glucuronate + 2 NADH + 3 H(+). It functions in the pathway nucleotide-sugar biosynthesis; UDP-alpha-D-glucuronate biosynthesis; UDP-alpha-D-glucuronate from UDP-alpha-D-glucose: step 1/1. Functionally, involved in the biosynthesis of UDP-glucuronic acid (UDP-GlcA), providing nucleotide sugars for cell-wall polymers. This Oryza sativa subsp. japonica (Rice) protein is UDP-glucose 6-dehydrogenase 1 (UGD1).